Consider the following 488-residue polypeptide: Germacrene A hydroxylase (488 aa).

Residues 7-23 (TSIALATILFFVYKFAT) traverse the membrane as a helical; Signal-anchor for type II membrane protein segment. Residues N169, N260, N379, and N410 are each glycosylated (N-linked (GlcNAc...) asparagine). Heme is bound at residue C432.

The protein belongs to the cytochrome P450 family. In terms of tissue distribution, expressed in floral glandular trichomes.

It is found in the endoplasmic reticulum membrane. It carries out the reaction (+)-(R)-germacrene A + 3 reduced [NADPH--hemoprotein reductase] + 3 O2 = germacra-1(10),4,11(13)-trien-12-oate + 3 oxidized [NADPH--hemoprotein reductase] + 4 H2O + 4 H(+). It participates in secondary metabolite biosynthesis; terpenoid biosynthesis. Involved in the biosynthesis of germacrene-derived sesquiterpene lactones. Component of the parthenolide biosynthetic pathway; parthenolide and conjugates are promising anti-cancer drugs highly active against colon cancer cells. Catalyzes three consecutive oxidations of germacrene A to produce germacrene A acid. The sequence is that of Germacrene A hydroxylase from Tanacetum parthenium (Feverfew).